The primary structure comprises 183 residues: Large ribosomal subunit protein uL6 (183 aa).

The protein belongs to the universal ribosomal protein uL6 family. Part of the 50S ribosomal subunit.

Functionally, this protein binds to the 23S rRNA, and is important in its secondary structure. It is located near the subunit interface in the base of the L7/L12 stalk, and near the tRNA binding site of the peptidyltransferase center. This is Large ribosomal subunit protein uL6 from Ruminiclostridium cellulolyticum (strain ATCC 35319 / DSM 5812 / JCM 6584 / H10) (Clostridium cellulolyticum).